Here is a 295-residue protein sequence, read N- to C-terminus: Cytidine deaminase (295 aa).

2 CMP/dCMP-type deaminase domains span residues 48-168 (EDSD…FGPA) and 187-295 (DDDE…YLSL). Residue 89–91 (NME) participates in substrate binding. Zn(2+) is bound at residue histidine 102. The active-site Proton donor is the glutamate 104. Zn(2+) is bound by residues cysteine 129 and cysteine 132.

This sequence belongs to the cytidine and deoxycytidylate deaminase family. In terms of assembly, homodimer. Zn(2+) serves as cofactor.

The enzyme catalyses cytidine + H2O + H(+) = uridine + NH4(+). It carries out the reaction 2'-deoxycytidine + H2O + H(+) = 2'-deoxyuridine + NH4(+). In terms of biological role, this enzyme scavenges exogenous and endogenous cytidine and 2'-deoxycytidine for UMP synthesis. This Vibrio cholerae serotype O1 (strain ATCC 39541 / Classical Ogawa 395 / O395) protein is Cytidine deaminase.